The following is a 481-amino-acid chain: Probable Xaa-Pro aminopeptidase PEPP (481 aa).

Mn(2+)-binding residues include aspartate 265, aspartate 276, glutamate 399, and glutamate 439.

This sequence belongs to the peptidase M24B family. Mn(2+) serves as cofactor.

The enzyme catalyses Release of any N-terminal amino acid, including proline, that is linked to proline, even from a dipeptide or tripeptide.. Functionally, catalyzes the removal of a penultimate prolyl residue from the N-termini of peptides. In Uncinocarpus reesii (strain UAMH 1704), this protein is Probable Xaa-Pro aminopeptidase PEPP (PEPP).